The primary structure comprises 362 residues: Spermidine/putrescine import ATP-binding protein PotA (362 aa).

The ABC transporter domain occupies 6–237; the sequence is ISFKHVVKSY…PINHYVADFI (232 aa). An ATP-binding site is contributed by 39–46; the sequence is GPSGCGKT.

This sequence belongs to the ABC transporter superfamily. Spermidine/putrescine importer (TC 3.A.1.11.1) family. The complex is composed of two ATP-binding proteins (PotA), two transmembrane proteins (PotB and PotC) and a solute-binding protein (PotD).

It localises to the cell membrane. The catalysed reaction is ATP + H2O + polyamine-[polyamine-binding protein]Side 1 = ADP + phosphate + polyamineSide 2 + [polyamine-binding protein]Side 1.. Functionally, part of the ABC transporter complex PotABCD involved in spermidine/putrescine import. Responsible for energy coupling to the transport system. The chain is Spermidine/putrescine import ATP-binding protein PotA from Ligilactobacillus salivarius (strain UCC118) (Lactobacillus salivarius).